A 1398-amino-acid chain; its full sequence is DNA-directed RNA polymerase subunit beta' (1398 aa).

Residues C70, C72, C85, and C88 each coordinate Zn(2+). The Mg(2+) site is built by D460, D462, and D464. Positions 814, 888, 895, and 898 each coordinate Zn(2+).

Belongs to the RNA polymerase beta' chain family. In terms of assembly, the RNAP catalytic core consists of 2 alpha, 1 beta, 1 beta' and 1 omega subunit. When a sigma factor is associated with the core the holoenzyme is formed, which can initiate transcription. It depends on Mg(2+) as a cofactor. The cofactor is Zn(2+).

The enzyme catalyses RNA(n) + a ribonucleoside 5'-triphosphate = RNA(n+1) + diphosphate. Its function is as follows. DNA-dependent RNA polymerase catalyzes the transcription of DNA into RNA using the four ribonucleoside triphosphates as substrates. The polypeptide is DNA-directed RNA polymerase subunit beta' (Pseudomonas putida (Arthrobacter siderocapsulatus)).